The chain runs to 101 residues: Glutaredoxin-1 (101 aa).

Positions 3-101 (DSFVQSKLRD…MMLRQIGALV (99 aa)) constitute a Glutaredoxin domain. Cysteines 23 and 26 form a disulfide.

It belongs to the glutaredoxin family.

Its subcellular location is the cytoplasm. Functionally, has a glutathione-disulfide oxidoreductase activity in the presence of NADPH and glutathione reductase. Reduces low molecular weight disulfides and proteins. The polypeptide is Glutaredoxin-1 (GLRX) (Gallus gallus (Chicken)).